The following is a 417-amino-acid chain: Blood group Rh(CE) polypeptide (417 aa).

The next 11 membrane-spanning stretches (helical) occupy residues 12-32 (CLPL…YFFT), 44-64 (LVAS…GLGF), 77-97 (VAFN…LDGF), 125-145 (ISAG…MVLV), 172-192 (FYVF…KPLP), 203-223 (TIPS…WPSV), 238-258 (MFNT…GSSL), 265-285 (ISMT…GTSC), 287-307 (LIPS…ISIG), 331-351 (IFSL…VLHT), and 358-378 (MIGF…VIAL).

It belongs to the ammonium transporter (TC 2.A.49) family. Rh subfamily. In terms of assembly, heterotrimer; a RHCE monomer interacts with a RHAG homodimer. Component of the ankyrin-1 complex in the erythrocyte, composed of ANK1, RHCE, RHAG, SLC4A1, EPB42, GYPA, GYPB and AQP1. Interacts (via the N- and C-terminal) with ANK1 (via ANk 1-5 repeats); mediates the primary membrane attachment site for ANK1. Restricted to tissues or cell lines expressing erythroid characters. Isoform 4g and isoform RhPI-Alpha are expressed in immature erythroblasts but not in mature erythroblasts.

It localises to the membrane. Component of the ankyrin-1 complex, a multiprotein complex involved in the stability and shape of the erythrocyte membrane. Mediates the primary membrane attachment site for ANK1 when associated with RHAG. May participate in the ammonium and carbon dioxide transport through the heterotrimer form. The protein is Blood group Rh(CE) polypeptide of Homo sapiens (Human).